The following is a 763-amino-acid chain: Phosphoglycerol transferase I (763 aa).

Helical transmembrane passes span Met-1–Ala-21, Trp-26–Tyr-46, Ile-77–Val-97, and Val-108–Phe-128.

It belongs to the OpgB family.

The protein localises to the cell inner membrane. The enzyme catalyses a phosphatidylglycerol + a membrane-derived-oligosaccharide D-glucose = a 1,2-diacyl-sn-glycerol + a membrane-derived-oligosaccharide 6-(glycerophospho)-D-glucose.. It functions in the pathway glycan metabolism; osmoregulated periplasmic glucan (OPG) biosynthesis. Functionally, transfers a phosphoglycerol residue from phosphatidylglycerol to the membrane-bound nascent glucan backbones. This is Phosphoglycerol transferase I from Salmonella heidelberg (strain SL476).